Consider the following 372-residue polypeptide: NADH-quinone oxidoreductase subunit D (372 aa).

It belongs to the complex I 49 kDa subunit family. NDH-1 is composed of 14 different subunits. Subunits NuoB, C, D, E, F, and G constitute the peripheral sector of the complex.

Its subcellular location is the cell inner membrane. The enzyme catalyses a quinone + NADH + 5 H(+)(in) = a quinol + NAD(+) + 4 H(+)(out). In terms of biological role, NDH-1 shuttles electrons from NADH, via FMN and iron-sulfur (Fe-S) centers, to quinones in the respiratory chain. The immediate electron acceptor for the enzyme in this species is believed to be ubiquinone. Couples the redox reaction to proton translocation (for every two electrons transferred, four hydrogen ions are translocated across the cytoplasmic membrane), and thus conserves the redox energy in a proton gradient. The polypeptide is NADH-quinone oxidoreductase subunit D (Desulfotalea psychrophila (strain LSv54 / DSM 12343)).